Consider the following 285-residue polypeptide: NAD kinase (285 aa).

Catalysis depends on Asp66, which acts as the Proton acceptor. Residues 66 to 67 (DG), 137 to 138 (ND), Arg148, Arg165, Asp167, and 178 to 183 (TAYSMS) each bind NAD(+).

It belongs to the NAD kinase family. Requires a divalent metal cation as cofactor.

Its subcellular location is the cytoplasm. The catalysed reaction is NAD(+) + ATP = ADP + NADP(+) + H(+). Functionally, involved in the regulation of the intracellular balance of NAD and NADP, and is a key enzyme in the biosynthesis of NADP. Catalyzes specifically the phosphorylation on 2'-hydroxyl of the adenosine moiety of NAD to yield NADP. This Chlorobium luteolum (strain DSM 273 / BCRC 81028 / 2530) (Pelodictyon luteolum) protein is NAD kinase.